A 517-amino-acid chain; its full sequence is Cytochrome P450 monooxygenase ausI (517 aa).

A helical transmembrane segment spans residues 8–28 (LAPLGQPWIAGLVVVSAVLYL). Cys457 provides a ligand contact to heme.

It belongs to the cytochrome P450 family. It depends on heme as a cofactor.

It is found in the membrane. It functions in the pathway secondary metabolite biosynthesis; terpenoid biosynthesis. Functionally, cytochrome P450 monooxygenase; part of the gene cluster that mediates the biosynthesis of calidodehydroaustin, a fungal meroterpenoid. The first step of the pathway is the synthesis of 3,5-dimethylorsellinic acid by the polyketide synthase ausA. 3,5-dimethylorsellinic acid is then prenylated by the polyprenyl transferase ausN. Further epoxidation by the FAD-dependent monooxygenase ausM and cyclization by the probable terpene cyclase ausL lead to the formation of protoaustinoid A. Protoaustinoid A is then oxidized to spiro-lactone preaustinoid A3 by the combined action of the FAD-binding monooxygenases ausB and ausC, and the dioxygenase ausE. Acid-catalyzed keto-rearrangement and ring contraction of the tetraketide portion of preaustinoid A3 by ausJ lead to the formation of preaustinoid A4. The aldo-keto reductase ausK, with the help of ausH, is involved in the next step by transforming preaustinoid A4 into isoaustinone which is in turn hydroxylated by the P450 monooxygenase ausI to form austinolide. The cytochrome P450 monooxygenase ausG modifies austinolide to austinol. Austinol is further acetylated to austin by the O-acetyltransferase ausP, which spontaneously changes to dehydroaustin. The cytochrome P450 monooxygenase ausR then converts dehydroaustin is into 7-dehydrodehydroaustin. The hydroxylation catalyzed by ausR permits the O-acetyltransferase ausQ to add an additional acetyl group to the molecule, leading to the formation of acetoxydehydroaustin. The short chain dehydrogenase ausT catalyzes the reduction of the double bond present between carbon atoms 1 and 2 to convert 7-dehydrodehydroaustin into 1,2-dihydro-7-hydroxydehydroaustin. AusQ catalyzes not only an acetylation reaction but also the addition of the PKS ausV diketide product to 1,2-dihydro-7-hydroxydehydroaustin, forming precalidodehydroaustin. Finally, the iron/alpha-ketoglutarate-dependent dioxygenase converts precalidodehydroaustin into calidodehydroaustin. The chain is Cytochrome P450 monooxygenase ausI from Aspergillus calidoustus.